We begin with the raw amino-acid sequence, 177 residues long: Large ribosomal subunit protein uL22 (177 aa).

Residues 118 to 177 (VESRPSREGRRGGAGESAGGARARRAQGSKAAAAKKAPASSSTKAATTTEASEEAKGGSQ) are disordered. Positions 121–130 (RPSREGRRGG) are enriched in basic and acidic residues. Residues 145–167 (GSKAAAAKKAPASSSTKAATTTE) are compositionally biased toward low complexity.

Belongs to the universal ribosomal protein uL22 family. Part of the 50S ribosomal subunit.

Functionally, this protein binds specifically to 23S rRNA; its binding is stimulated by other ribosomal proteins, e.g. L4, L17, and L20. It is important during the early stages of 50S assembly. It makes multiple contacts with different domains of the 23S rRNA in the assembled 50S subunit and ribosome. The globular domain of the protein is located near the polypeptide exit tunnel on the outside of the subunit, while an extended beta-hairpin is found that lines the wall of the exit tunnel in the center of the 70S ribosome. The chain is Large ribosomal subunit protein uL22 from Mycobacterium sp. (strain JLS).